Here is a 561-residue protein sequence, read N- to C-terminus: Terpene synthase 3 (561 aa).

Residues D315, D319, D458, and E466 each coordinate Mg(2+). The DDXXD motif motif lies at 315-319 (DDVYD).

The protein belongs to the terpene synthase family. Tpsa subfamily. The cofactor is Mg(2+). Mn(2+) serves as cofactor. As to expression, mostly expressed in stems amd leaves, and, to a lower extent, in roots and fruits.

It carries out the reaction (2E,6E)-farnesyl diphosphate = germacrene D + diphosphate. The enzyme catalyses (2E,6E)-farnesyl diphosphate = alpha-copaene + diphosphate. It functions in the pathway secondary metabolite biosynthesis; terpenoid biosynthesis. Functionally, sesquiterpene synthase involved in the biosynthesis of volatile compounds that contribute to the characteristic flavors of black pepper. Mediates the conversion of (2E,6E)-farnesyl diphosphate (FPP) into alpha-copaene and germacrene D. This is Terpene synthase 3 from Piper nigrum (Black pepper).